Consider the following 266-residue polypeptide: DLA class II histocompatibility antigen, DR-1 beta chain (266 aa).

Residues M1 to A29 form the signal peptide. The interval R30–V124 is beta-1. The Extracellular segment spans residues R30–K227. Cystine bridges form between C44–C108 and C146–C202. N48 carries N-linked (GlcNAc...) asparagine glycosylation. Residues E125–K227 are beta-2. The Ig-like C1-type domain occupies P126–T214. A helical membrane pass occupies residues M228 to F250. The Cytoplasmic segment spans residues R251–S266.

The protein belongs to the MHC class II family.

The protein localises to the membrane. This is DLA class II histocompatibility antigen, DR-1 beta chain from Canis lupus familiaris (Dog).